A 238-amino-acid polypeptide reads, in one-letter code: Pyridoxine 5'-phosphate synthase (238 aa).

3-amino-2-oxopropyl phosphate contacts are provided by Asn-7 and Arg-18. His-43 acts as the Proton acceptor in catalysis. Residues Arg-45 and His-50 each coordinate 1-deoxy-D-xylulose 5-phosphate. Glu-70 acts as the Proton acceptor in catalysis. Thr-100 lines the 1-deoxy-D-xylulose 5-phosphate pocket. Catalysis depends on His-190, which acts as the Proton donor. 3-amino-2-oxopropyl phosphate contacts are provided by residues Asp-191 and 213–214 (GH).

Belongs to the PNP synthase family. In terms of assembly, homooctamer; tetramer of dimers.

Its subcellular location is the cytoplasm. The catalysed reaction is 3-amino-2-oxopropyl phosphate + 1-deoxy-D-xylulose 5-phosphate = pyridoxine 5'-phosphate + phosphate + 2 H2O + H(+). It functions in the pathway cofactor biosynthesis; pyridoxine 5'-phosphate biosynthesis; pyridoxine 5'-phosphate from D-erythrose 4-phosphate: step 5/5. Catalyzes the complicated ring closure reaction between the two acyclic compounds 1-deoxy-D-xylulose-5-phosphate (DXP) and 3-amino-2-oxopropyl phosphate (1-amino-acetone-3-phosphate or AAP) to form pyridoxine 5'-phosphate (PNP) and inorganic phosphate. This chain is Pyridoxine 5'-phosphate synthase, found in Cytophaga hutchinsonii (strain ATCC 33406 / DSM 1761 / CIP 103989 / NBRC 15051 / NCIMB 9469 / D465).